A 1366-amino-acid polypeptide reads, in one-letter code: DNA-directed RNA polymerase subunit beta (1366 aa).

The protein belongs to the RNA polymerase beta chain family. In terms of assembly, the RNAP catalytic core consists of 2 alpha, 1 beta, 1 beta' and 1 omega subunit. When a sigma factor is associated with the core the holoenzyme is formed, which can initiate transcription.

The enzyme catalyses RNA(n) + a ribonucleoside 5'-triphosphate = RNA(n+1) + diphosphate. Functionally, DNA-dependent RNA polymerase catalyzes the transcription of DNA into RNA using the four ribonucleoside triphosphates as substrates. This Polynucleobacter necessarius subsp. necessarius (strain STIR1) protein is DNA-directed RNA polymerase subunit beta.